A 390-amino-acid chain; its full sequence is Succinate--CoA ligase [ADP-forming] subunit beta (390 aa).

An ATP-grasp domain is found at 9 to 248 (KDILRKFGVT…TSEEDPFEVE (240 aa)). ATP contacts are provided by residues K50, 57-59 (GRG), E103, M106, and E111. The Mg(2+) site is built by N203 and D217. Substrate contacts are provided by residues N268 and 325-327 (GIV).

It belongs to the succinate/malate CoA ligase beta subunit family. As to quaternary structure, heterotetramer of two alpha and two beta subunits. Mg(2+) is required as a cofactor.

The catalysed reaction is succinate + ATP + CoA = succinyl-CoA + ADP + phosphate. The enzyme catalyses GTP + succinate + CoA = succinyl-CoA + GDP + phosphate. It functions in the pathway carbohydrate metabolism; tricarboxylic acid cycle; succinate from succinyl-CoA (ligase route): step 1/1. Succinyl-CoA synthetase functions in the citric acid cycle (TCA), coupling the hydrolysis of succinyl-CoA to the synthesis of either ATP or GTP and thus represents the only step of substrate-level phosphorylation in the TCA. The beta subunit provides nucleotide specificity of the enzyme and binds the substrate succinate, while the binding sites for coenzyme A and phosphate are found in the alpha subunit. In Chlorobium chlorochromatii (strain CaD3), this protein is Succinate--CoA ligase [ADP-forming] subunit beta.